A 451-amino-acid polypeptide reads, in one-letter code: Homeobox protein meis3-B (451 aa).

A disordered region spans residues 33–64; it reads HHSLSQSTPYGSTGAAHRVPMPPGMGSNDGLK. Residues 34 to 43 are compositionally biased toward polar residues; that stretch reads HSLSQSTPYG. Positions 102 to 185 constitute an MEIS N-terminal domain; sequence GGDVCSSDSF…PIDLVIDDRD (84 aa). The interval 206–272 is disordered; it reads NNTWIRDHDE…RDKKRNKKRG (67 aa). Residues 218–230 are compositionally biased toward low complexity; sequence STHSGTPGPSSGG. The segment covering 231–242 has biased composition (polar residues); the sequence is LASQSGDNSSEQ. Positions 267–329 form a DNA-binding region, homeobox; the sequence is RNKKRGIFPK…NARRRIVQPM (63 aa).

It belongs to the TALE/MEIS homeobox family.

The protein localises to the nucleus. Its function is as follows. A caudalizing protein which is required to pattern the anterior/posterior (A/P) axis during central nervous system (CNS) formation. Inhibits anterior neural expression and acts as a transcriptional activator to induce posterior neural gene expression. Maintains a proper A/P balance required for hindbrain formation by activating the FGF/MAPK pathway, which modulates the planar cell polarity (PCP) pathway. Interacts with retinoid signaling during hindbrain patterning. This chain is Homeobox protein meis3-B (meis3-b), found in Xenopus laevis (African clawed frog).